The primary structure comprises 188 residues: Tetratricopeptide repeat protein 36 (188 aa).

TPR repeat units follow at residues 50-83 (SKAL…LPER), 85-117 (SAYN…SGGR), and 122-155 (RQGF…GSPF).

It belongs to the TTC36 family.

The chain is Tetratricopeptide repeat protein 36 (TTC36) from Bos taurus (Bovine).